A 188-amino-acid polypeptide reads, in one-letter code: MASVSTNEFKGGLKFMLDNEPCAIIDNEYVKPGKGQAFNRVKLRKLLSGKVLEKTFKSGESFELADVVDVELGYLYNDGEFYHFMNNETFEQIAADVKAVADSAKWLVENDVCTLTLWNDNPITVTPPNFVEIEVTETDPGLKGDTQGTGGKPATLATGAVVRVPLFIAIGEVVKVDTRTGEYVGRVK.

The residue at position 34 (lysine 34) is an N6-(3,6-diaminohexanoyl)-5-hydroxylysine.

The protein belongs to the elongation factor P family. In terms of processing, may be beta-lysylated on the epsilon-amino group of Lys-34 by the combined action of EpmA and EpmB, and then hydroxylated on the C5 position of the same residue by EpmC (if this protein is present). Lysylation is critical for the stimulatory effect of EF-P on peptide-bond formation. The lysylation moiety may extend toward the peptidyltransferase center and stabilize the terminal 3-CCA end of the tRNA. Hydroxylation of the C5 position on Lys-34 may allow additional potential stabilizing hydrogen-bond interactions with the P-tRNA.

The protein localises to the cytoplasm. It participates in protein biosynthesis; polypeptide chain elongation. In terms of biological role, involved in peptide bond synthesis. Alleviates ribosome stalling that occurs when 3 or more consecutive Pro residues or the sequence PPG is present in a protein, possibly by augmenting the peptidyl transferase activity of the ribosome. Modification of Lys-34 is required for alleviation. The chain is Elongation factor P from Vibrio atlanticus (strain LGP32) (Vibrio splendidus (strain Mel32)).